We begin with the raw amino-acid sequence, 131 residues long: DNA-directed RNA polymerase subunit Rpo8 (131 aa).

This sequence belongs to the archaeal Rpo8 RNA polymerase subunit family. In terms of assembly, part of the 13-subunit RNA polymerase complex. Interacts with Rpo1N on the periphery of the clamp head.

It localises to the cytoplasm. The catalysed reaction is RNA(n) + a ribonucleoside 5'-triphosphate = RNA(n+1) + diphosphate. Its function is as follows. DNA-dependent RNA polymerase (RNAP) catalyzes the transcription of DNA into RNA using the four ribonucleoside triphosphates as substrates. The protein is DNA-directed RNA polymerase subunit Rpo8 of Saccharolobus shibatae (strain ATCC 51178 / DSM 5389 / JCM 8931 / NBRC 15437 / B12) (Sulfolobus shibatae).